We begin with the raw amino-acid sequence, 64 residues long: Conotoxin VnMLCL-042 (64 aa).

The first 19 residues, 1–19 (MLCLPVFIILLLLASPAAP), serve as a signal peptide directing secretion. The propeptide occupies 20–43 (NPLQTRIQSNLIRAGPEDANMKTD). Met-63 is modified (methionine amide).

The protein belongs to the conotoxin T superfamily. As to expression, expressed by the venom duct.

The protein resides in the secreted. This Conus ventricosus (Mediterranean cone) protein is Conotoxin VnMLCL-042.